Consider the following 396-residue polypeptide: Immunoglobulin heavy constant gamma 4 (396 aa).

The tract at residues 1–98 is CH1; that stretch reads ASTKGPSVFP…PSNTKVDKRV (98 aa). Residues 1–347 lie on the Extracellular side of the membrane; the sequence is ASTKGPSVFP…DGELDGLWTT (347 aa). Ig-like domains are found at residues 6-99, 118-217, and 226-322; these read PSVF…KRVE, PSVF…KTIS, and PQVY…KSLS. Cysteines 27 and 83 form a disulfide. The segment at 99–110 is hinge; sequence ESKYGPPCPSCP. The interval 111-220 is CH2; it reads APEFLGGPSV…SIEKTISKAK (110 aa). 2 disulfides stabilise this stretch: Cys141/Cys201 and Cys247/Cys305. N-linked (GlcNAc...) (complex) asparagine glycosylation is present at Asn177. Residues 221–327 are CH3; sequence GQPREPQVYT…QKSLSLSLEL (107 aa). The chain crosses the membrane as a helical span at residues 348–368; the sequence is ITIFITLFLLSVCYSATVTFF. Over 369–396 the chain is Cytoplasmic; sequence KVKWIFSSVVDLKQTIVPDYRNMIRQGA.

As to quaternary structure, immunoglobulins are composed of two identical heavy chains and two identical light chains; disulfide-linked. Glycosylation on Asn-177 is required for interaction with Fc receptors and ability to activate the complement pathway. In terms of processing, (Microbial infection) Deglycosylation on Asn-177 by S.pyogenes EndoS or Endos2 endoglucosidases prevents interaction between immunoglobulin-gamma (IgG) and Fc receptors, impairing ability to activate the complement pathway.

The protein resides in the secreted. The protein localises to the cell membrane. In terms of biological role, constant region of immunoglobulin heavy chains. Immunoglobulins, also known as antibodies, are membrane-bound or secreted glycoproteins produced by B lymphocytes. In the recognition phase of humoral immunity, the membrane-bound immunoglobulins serve as receptors which, upon binding of a specific antigen, trigger the clonal expansion and differentiation of B lymphocytes into immunoglobulins-secreting plasma cells. Secreted immunoglobulins mediate the effector phase of humoral immunity, which results in the elimination of bound antigens. The antigen binding site is formed by the variable domain of one heavy chain, together with that of its associated light chain. Thus, each immunoglobulin has two antigen binding sites with remarkable affinity for a particular antigen. The variable domains are assembled by a process called V-(D)-J rearrangement and can then be subjected to somatic hypermutations which, after exposure to antigen and selection, allow affinity maturation for a particular antigen. This chain is Immunoglobulin heavy constant gamma 4, found in Homo sapiens (Human).